Here is a 245-residue protein sequence, read N- to C-terminus: 1-(5-phosphoribosyl)-5-[(5-phosphoribosylamino)methylideneamino] imidazole-4-carboxamide isomerase (245 aa).

The active-site Proton acceptor is the D7. The Proton donor role is filled by D129.

It belongs to the HisA/HisF family.

It localises to the cytoplasm. It carries out the reaction 1-(5-phospho-beta-D-ribosyl)-5-[(5-phospho-beta-D-ribosylamino)methylideneamino]imidazole-4-carboxamide = 5-[(5-phospho-1-deoxy-D-ribulos-1-ylimino)methylamino]-1-(5-phospho-beta-D-ribosyl)imidazole-4-carboxamide. It functions in the pathway amino-acid biosynthesis; L-histidine biosynthesis; L-histidine from 5-phospho-alpha-D-ribose 1-diphosphate: step 4/9. This Vibrio campbellii (strain ATCC BAA-1116) protein is 1-(5-phosphoribosyl)-5-[(5-phosphoribosylamino)methylideneamino] imidazole-4-carboxamide isomerase.